The sequence spans 299 residues: tRNA dimethylallyltransferase (299 aa).

13–20 (GPTASGKT) provides a ligand contact to ATP. A substrate-binding site is contributed by 15–20 (TASGKT). The tract at residues 38–41 (DSRQ) is interaction with substrate tRNA.

Belongs to the IPP transferase family. In terms of assembly, monomer. Mg(2+) is required as a cofactor.

It carries out the reaction adenosine(37) in tRNA + dimethylallyl diphosphate = N(6)-dimethylallyladenosine(37) in tRNA + diphosphate. Catalyzes the transfer of a dimethylallyl group onto the adenine at position 37 in tRNAs that read codons beginning with uridine, leading to the formation of N6-(dimethylallyl)adenosine (i(6)A). This is tRNA dimethylallyltransferase from Parasynechococcus marenigrum (strain WH8102).